Here is a 1154-residue protein sequence, read N- to C-terminus: DNA-directed RNA polymerase subunit beta (1154 aa).

The segment covering 1108-1123 (ELGIDIQGEDRSERAG) has biased composition (basic and acidic residues). Residues 1108-1136 (ELGIDIQGEDRSERAGEPASPDEMDDEEE) are disordered. Over residues 1127 to 1136 (SPDEMDDEEE) the composition is skewed to acidic residues.

This sequence belongs to the RNA polymerase beta chain family. In terms of assembly, the RNAP catalytic core consists of 2 alpha, 1 beta, 1 beta' and 1 omega subunit. When a sigma factor is associated with the core the holoenzyme is formed, which can initiate transcription.

The catalysed reaction is RNA(n) + a ribonucleoside 5'-triphosphate = RNA(n+1) + diphosphate. Its function is as follows. DNA-dependent RNA polymerase catalyzes the transcription of DNA into RNA using the four ribonucleoside triphosphates as substrates. This is DNA-directed RNA polymerase subunit beta from Heliobacterium modesticaldum (strain ATCC 51547 / Ice1).